The following is a 273-amino-acid chain: Large ribosomal subunit protein uL2 (273 aa).

Disordered stretches follow at residues 35-54 and 222-273; these read DKKDKSGGRNNNGRITTRHI and GMAM…RRNK. Residues 229-239 are compositionally biased toward basic and acidic residues; it reads DHPHGGGEGRN. Residues 253 to 273 are compositionally biased toward basic residues; sequence KGFKTRKNKRTDKYIVRRRNK.

This sequence belongs to the universal ribosomal protein uL2 family. Part of the 50S ribosomal subunit. Forms a bridge to the 30S subunit in the 70S ribosome.

One of the primary rRNA binding proteins. Required for association of the 30S and 50S subunits to form the 70S ribosome, for tRNA binding and peptide bond formation. It has been suggested to have peptidyltransferase activity; this is somewhat controversial. Makes several contacts with the 16S rRNA in the 70S ribosome. This chain is Large ribosomal subunit protein uL2, found in Aeromonas hydrophila subsp. hydrophila (strain ATCC 7966 / DSM 30187 / BCRC 13018 / CCUG 14551 / JCM 1027 / KCTC 2358 / NCIMB 9240 / NCTC 8049).